Here is a 417-residue protein sequence, read N- to C-terminus: Actin-related protein 10 (417 aa).

The protein belongs to the actin family. In terms of assembly, subunit of dynactin, a multiprotein complex part of a tripartite complex with dynein and a adapter, such as BICDL1, BICD2 or HOOK3. The dynactin complex is built around ACTR1A/ACTB filament and consists of an actin-related filament composed of a shoulder domain, a pointed end and a barbed end. Its length is defined by its flexible shoulder domain. The soulder is composed of 2 DCTN1 subunits, 4 DCTN2 and 2 DCTN3. The 4 DCNT2 (via N-terminus) bind the ACTR1A filament and act as molecular rulers to determine the length. The pointed end is important for binding dynein-dynactin cargo adapters. Consists of 4 subunits: ACTR10, DCNT4, DCTN5 and DCTN6. The barbed end is composed of a CAPZA1:CAPZB heterodimers, which binds ACTR1A/ACTB filament and dynactin and stabilizes dynactin.

Its subcellular location is the cytoplasm. It localises to the cytoskeleton. Its function is as follows. Part of the dynactin complex that activates the molecular motor dynein for ultra-processive transport along microtubules. The protein is Actin-related protein 10 (ACTR10) of Homo sapiens (Human).